The primary structure comprises 300 residues: ClpXP adapter protein SpxH (300 aa).

The protein belongs to the SpxH family. Interacts with Spx.

The protein resides in the cytoplasm. Adapter protein required for efficient degradation of Spx by ClpXP under non-stress conditions. Interaction with Spx stabilizes Spx and exposes the C-terminus of Spx for recognition and proteolysis by ClpXP. This chain is ClpXP adapter protein SpxH, found in Shouchella clausii (strain KSM-K16) (Alkalihalobacillus clausii).